The chain runs to 463 residues: Cysteine--tRNA ligase (463 aa).

Cysteine 30 lines the Zn(2+) pocket. A 'HIGH' region motif is present at residues 32–42; sequence MTVYDYCHVGH. The Zn(2+) site is built by cysteine 214, histidine 239, and glutamate 243. The short motif at 271 to 275 is the 'KMSKS' region element; the sequence is KMSKS. Lysine 274 provides a ligand contact to ATP.

The protein belongs to the class-I aminoacyl-tRNA synthetase family. In terms of assembly, monomer. The cofactor is Zn(2+).

Its subcellular location is the cytoplasm. The catalysed reaction is tRNA(Cys) + L-cysteine + ATP = L-cysteinyl-tRNA(Cys) + AMP + diphosphate. This Ralstonia pickettii (strain 12J) protein is Cysteine--tRNA ligase.